The chain runs to 334 residues: WD repeat domain 54 (334 aa).

3 WD repeats span residues 162-206 (GHQT…TLLT), 208-247 (IAGFGVPCPSVQLWQGIVAAGYGNGQVRLYDAGTGALHIQ), and 250-289 (AHARTISALDLAPEVGKLLSAAEDTFVHIWKLNRNPESGS).

As to quaternary structure, homodimer and homotrimer; forms tight forms of dimers and trimers. Interacts with IZUMO1 and IZUMO1R/JUNO. In terms of processing, cross-linked to tightly form both dimers and trimers by TGM2. Cross-linking enhances the activation of EGF receptor-mediated signaling pathway. Cross-linking is inhibited by EGF. Post-translationally, ubiquitinated. EGF increases ubiquitination. In terms of tissue distribution, widely expressed in the ovary and testis (at protein level).

It localises to the vesicle. The protein resides in the cytoplasm. Its subcellular location is the cell membrane. Functionally, plays a role in the adhesion and fusion of the sperm-oocyte membrane through its interactions with IZUMO1 and IZUMO1R/JUNO. When cross-linked to form dimers and trimers, it has a regulatory effect on ERK signaling pathway activity in response to EGF stimulation. Colocalizes with the EGF receptor in WDR54-specific vesicle where it sustains the internalization and controls the degradation of the EGF receptor after EGF stimulation. This chain is WD repeat domain 54 (Wdr54), found in Rattus norvegicus (Rat).